The primary structure comprises 907 residues: Protein translocase subunit SecA (907 aa).

Residues Q87, 105–109 (GEGKT), and D512 each bind ATP. Residues 834-907 (QEDVERMEEQ…KKYKQCHGKI (74 aa)) form a disordered region. Composition is skewed to basic and acidic residues over residues 836–853 (DVERMEEQRRLQAEEAAR) and 873–888 (EEAHSPMVREERKVGR). Zn(2+)-binding residues include C892, C894, C903, and H904. Residues 898–907 (KKYKQCHGKI) show a composition bias toward basic residues.

The protein belongs to the SecA family. Monomer and homodimer. Part of the essential Sec protein translocation apparatus which comprises SecA, SecYEG and auxiliary proteins SecDF-YajC and YidC. It depends on Zn(2+) as a cofactor.

The protein localises to the cell inner membrane. The protein resides in the cytoplasm. The catalysed reaction is ATP + H2O + cellular proteinSide 1 = ADP + phosphate + cellular proteinSide 2.. Functionally, part of the Sec protein translocase complex. Interacts with the SecYEG preprotein conducting channel. Has a central role in coupling the hydrolysis of ATP to the transfer of proteins into and across the cell membrane, serving both as a receptor for the preprotein-SecB complex and as an ATP-driven molecular motor driving the stepwise translocation of polypeptide chains across the membrane. This chain is Protein translocase subunit SecA, found in Aliivibrio fischeri (strain MJ11) (Vibrio fischeri).